The primary structure comprises 311 residues: Putative dihydroorotate dehydrogenase A (fumarate) (311 aa).

Residues lysine 45, 69–73, and asparagine 128 contribute to the substrate site; that span reads NSMGL. 45 to 46 contributes to the FMN binding site; the sequence is KT. Asparagine 128 is a binding site for FMN. The active-site Nucleophile is cysteine 131. The FMN site is built by lysine 165 and valine 193. 194–195 contacts substrate; that stretch reads NS. Residues glycine 220, 248-249, and 270-271 each bind FMN; these read GG and GT.

This sequence belongs to the dihydroorotate dehydrogenase family. Type 1 subfamily. Homodimer. It depends on FMN as a cofactor.

It localises to the cytoplasm. It catalyses the reaction (S)-dihydroorotate + fumarate = orotate + succinate. It functions in the pathway pyrimidine metabolism; UMP biosynthesis via de novo pathway. Its function is as follows. Catalyzes the conversion of dihydroorotate to orotate with fumarate as the electron acceptor. This Streptococcus equi subsp. equi (strain 4047) protein is Putative dihydroorotate dehydrogenase A (fumarate) (pyrD).